The chain runs to 134 residues: MFADISAQHWAFAIYVIGAIAICLTMIGLAALLGGRAQGRTKNKPFESGVDSVGTARLRFSAKFYLVAMFFVIFDVEALYLFAWSVSVRESGWVGFIEATIFIGLLLIGLVYLWRIGALEWSPRKPQLNNKNTD.

3 helical membrane passes run 12-32 (FAIY…LAAL), 64-84 (FYLV…LFAW), and 93-113 (WVGF…LVYL).

Belongs to the complex I subunit 3 family. In terms of assembly, NDH-1 is composed of 13 different subunits. Subunits NuoA, H, J, K, L, M, N constitute the membrane sector of the complex.

Its subcellular location is the cell inner membrane. It catalyses the reaction a quinone + NADH + 5 H(+)(in) = a quinol + NAD(+) + 4 H(+)(out). Its function is as follows. NDH-1 shuttles electrons from NADH, via FMN and iron-sulfur (Fe-S) centers, to quinones in the respiratory chain. The immediate electron acceptor for the enzyme in this species is believed to be ubiquinone. Couples the redox reaction to proton translocation (for every two electrons transferred, four hydrogen ions are translocated across the cytoplasmic membrane), and thus conserves the redox energy in a proton gradient. This is NADH-quinone oxidoreductase subunit A from Shewanella oneidensis (strain ATCC 700550 / JCM 31522 / CIP 106686 / LMG 19005 / NCIMB 14063 / MR-1).